The primary structure comprises 126 residues: Large ribosomal subunit protein bL12 (126 aa).

Belongs to the bacterial ribosomal protein bL12 family. In terms of assembly, homodimer. Part of the ribosomal stalk of the 50S ribosomal subunit. Forms a multimeric L10(L12)X complex, where L10 forms an elongated spine to which 2 to 4 L12 dimers bind in a sequential fashion. Binds GTP-bound translation factors.

Functionally, forms part of the ribosomal stalk which helps the ribosome interact with GTP-bound translation factors. Is thus essential for accurate translation. This chain is Large ribosomal subunit protein bL12, found in Methylobacterium sp. (strain 4-46).